We begin with the raw amino-acid sequence, 156 residues long: Transcription elongation factor GreA (156 aa).

Positions 46 to 66 (AEYHAAREKQSFVEGRIKELE) form a coiled coil.

Belongs to the GreA/GreB family.

Necessary for efficient RNA polymerase transcription elongation past template-encoded arresting sites. The arresting sites in DNA have the property of trapping a certain fraction of elongating RNA polymerases that pass through, resulting in locked ternary complexes. Cleavage of the nascent transcript by cleavage factors such as GreA or GreB allows the resumption of elongation from the new 3'terminus. GreA releases sequences of 2 to 3 nucleotides. This is Transcription elongation factor GreA from Paracoccus denitrificans (strain Pd 1222).